The primary structure comprises 325 residues: LIM and senescent cell antigen-like-containing domain protein 1 (325 aa).

An N-acetylalanine modification is found at alanine 2. 5 LIM zinc-binding domains span residues 10 to 62, 71 to 121, 135 to 184, 193 to 243, and 252 to 303; these read CERC…CEHD, CHQC…CRPC, CQKC…CLPC, CGAC…CETH, and CFHC…CKKC.

As to quaternary structure, component of the heterotrimeric IPP (ILK-PINCH-PARVIN) complex composed of ILK, LIMS1/PINCH and PARVA; the complex binds to F-actin via the C-terminal tail of LIMS1 and the N-terminal region of PARVA, promoting F-actin filament bundling. Formation of the IPP complex is dependent on protein kinase C and precedes integrin-mediated cell adhesion and spreading. Competes with LIMS2 for interaction with ILK. Interacts with SH3/SH2 adapter NCK2, thereby linking the complex to cell surface receptors. Interacts (via LIM zinc-binding 5) with TGFB1I1.

It is found in the cell junction. The protein resides in the focal adhesion. Its subcellular location is the cell membrane. In terms of biological role, within the IPP (ILK-PINCH-PARVIN) complex, binds to F-actin, promoting F-actin bundling, a process required to generate force for actin cytoskeleton reorganization and subsequent dynamic cell adhesion events such as cell spreading and migration. This chain is LIM and senescent cell antigen-like-containing domain protein 1 (Lims1), found in Mus musculus (Mouse).